We begin with the raw amino-acid sequence, 1441 residues long: ABC transporter G family member 41 (1441 aa).

The segment covering 1–14 (MEDKKQQQQQQREE) has biased composition (basic and acidic residues). The interval 1 to 28 (MEDKKQQQQQQREEAEAEEEAPVVPSSL) is disordered. In terms of domain architecture, ABC transporter 1 spans 159-432 (ATARGLSRRP…FESCGFKCPE (274 aa)). Position 192-199 (192-199 (GPPGCGKT)) interacts with ATP. The ABC transmembrane type-2 1 domain occupies 510–722 (DLLKACFARE…AEIGLTGNEF (213 aa)). 6 consecutive transmembrane segments (helical) span residues 528 to 548 (FIYI…GTVF), 566 to 586 (SLFY…AIAV), 600 to 620 (FYPA…LSLV), 642 to 662 (FFCQ…LFRC), 672 to 692 (ASSV…GFII), and 758 to 778 (ASAL…GLTI). An ABC transporter 2 domain is found at 838–1090 (ISFQDVNYYV…NVIHYFETIP (253 aa)). 883-890 (GVTGAGKT) serves as a coordination point for ATP. The region spanning 1163–1379 (EQLKACIWKQ…TLNVFFTTQF (217 aa)) is the ABC transmembrane type-2 2 domain. Transmembrane regions (helical) follow at residues 1187–1207 (ILFI…QGDI), 1215–1235 (GLFT…INNC), 1272–1292 (IPYV…MIGY), 1300–1320 (FWFM…GMMI), 1329–1349 (VASI…GFIV), 1357–1377 (WWIW…FFTT), and 1413–1433 (LAAI…GLSI).

This sequence belongs to the ABC transporter superfamily. ABCG family. PDR (TC 3.A.1.205) subfamily.

The protein localises to the membrane. May be a general defense protein. This is ABC transporter G family member 41 from Oryza sativa subsp. japonica (Rice).